The primary structure comprises 168 residues: Small ribosomal subunit protein uS5 (168 aa).

Positions 13–76 (LEENVVAINR…EDAKRKLITV (64 aa)) constitute an S5 DRBM domain.

It belongs to the universal ribosomal protein uS5 family. Part of the 30S ribosomal subunit. Contacts proteins S4 and S8.

Its function is as follows. With S4 and S12 plays an important role in translational accuracy. In terms of biological role, located at the back of the 30S subunit body where it stabilizes the conformation of the head with respect to the body. The sequence is that of Small ribosomal subunit protein uS5 from Leuconostoc mesenteroides subsp. mesenteroides (strain ATCC 8293 / DSM 20343 / BCRC 11652 / CCM 1803 / JCM 6124 / NCDO 523 / NBRC 100496 / NCIMB 8023 / NCTC 12954 / NRRL B-1118 / 37Y).